A 150-amino-acid chain; its full sequence is UPF0178 protein PC1_0756 (150 aa).

It belongs to the UPF0178 family.

The chain is UPF0178 protein PC1_0756 from Pectobacterium carotovorum subsp. carotovorum (strain PC1).